The primary structure comprises 1034 residues: Ice nucleation protein InaU (1034 aa).

Residues 162-993 (ATYGSTLSGT…LTAGENSVLI (832 aa)) form an octapeptide periodicity region. Disordered stretches follow at residues 260–287 (YGST…KGSD), 311–342 (TQTA…GYGS), 356–383 (YGST…KGSD), 407–438 (TQTA…GYGS), 452–480 (YGST…GSDL), and 570–597 (AREG…TGYG). 6 stretches are compositionally biased toward polar residues: residues 261–286 (GSTQ…QKGS), 311–334 (TQTA…QKGS), 357–382 (GSTQ…QKGS), 407–430 (TQTA…QKGS), 453–480 (GSTQ…GSDL), and 580–592 (YGST…NSDL).

The protein belongs to the bacterial ice nucleation protein family.

The protein localises to the cell outer membrane. Ice nucleation proteins enable bacteria to nucleate crystallization in supercooled water. In Pantoea ananas (Erwinia uredovora), this protein is Ice nucleation protein InaU (inaU).